Consider the following 363-residue polypeptide: Cyanuric acid amidohydrolase (363 aa).

Residues M1–D104 are RU A. Substrate contacts are provided by residues R52 and S83–G84. Residues R112–E249 form an RU B region. K162 is an active-site residue. Substrate is bound by residues R194 and S232–A233. The active-site Nucleophile is the S232. The RU C stretch occupies residues L255 to A363. E297 provides a ligand contact to Mg(2+). Residues R324 and S343–G344 contribute to the substrate site. Residues A346, Q349, G350, P351, and G354 each coordinate Mg(2+).

Belongs to the cyclic amide hydrolase (CyAH) family. In terms of assembly, homotetramer.

It carries out the reaction cyanurate + H2O = 1-carboxybiuret + H(+). It participates in xenobiotic degradation; atrazine degradation; biuret from cyanurate: step 1/1. Its activity is regulated as follows. Inhibited by barbituric acid. Its function is as follows. Responsible for the hydrolysis of cyanuric acid, an intermediate formed during catabolism of s-triazine based compounds in herbicides such as atrazine and polymers such as melamine. Catalyzes the hydrolytic opening of the s-triazine ring of cyanuric acid (2,4,6-trihydroxy-s-triazine) to yield carbon dioxide and carboxybiuret, which spontaneously decarboxylates to biuret. The polypeptide is Cyanuric acid amidohydrolase (atzD) (Pseudomonas sp. (strain ADP)).